The following is a 371-amino-acid chain: Cell division control protein 3 (371 aa).

A Septin-type G domain is found at 22–307 (AGIDFNIMTV…DEYKTREIGL (286 aa)). Positions 32–39 (GSNGLGKS) are G1 motif. GTP contacts are provided by residues 32–39 (GSNGLGKS), glycine 116, 195–203 (KSDLLSDSE), and arginine 257. A G3 motif region spans residues 113–116 (EVDG). The G4 motif stretch occupies residues 194-197 (GKSD).

The protein belongs to the TRAFAC class TrmE-Era-EngA-EngB-Septin-like GTPase superfamily. Septin GTPase family. In terms of assembly, component of the septin complex.

Functionally, septins are GTPases involved in cytokinesis. The septins localize to the site of cleavage and act as a structural scaffold that recruits different components involved in diverse processes at specific stages during the cell cycle. Septins are also involved in cell morphogenesis, chitin deposition, cell cycle regulation, cell compartmentalization and spore wall formation. This chain is Cell division control protein 3 (CDC3), found in Encephalitozoon cuniculi (strain GB-M1) (Microsporidian parasite).